Reading from the N-terminus, the 498-residue chain is Angiopoietin-1 (498 aa).

An N-terminal signal peptide occupies residues M1–C19. Residues Q81–A119 adopt a coiled-coil conformation. 5 N-linked (GlcNAc...) asparagine glycosylation sites follow: N92, N122, N154, N243, and N295. Positions L153 to L261 form a coiled coil. Residues R277 to D497 form the Fibrinogen C-terminal domain. Intrachain disulfides connect C286-C315 and C439-C452.

Homooligomer. Interacts with TEK/TIE2. Interacts with SVEP1/polydom. Interacts with THBD; this interaction significantly inhibits the generation of activated PC and TAFIa/CPB2 by the thrombin/thrombomodulin complex.

It is found in the secreted. Functionally, binds and activates TEK/TIE2 receptor by inducing its dimerization and tyrosine phosphorylation. Plays an important role in the regulation of angiogenesis, endothelial cell survival, proliferation, migration, adhesion and cell spreading, reorganization of the actin cytoskeleton, but also maintenance of vascular quiescence. Required for normal angiogenesis and heart development during embryogenesis. After birth, activates or inhibits angiogenesis, depending on the context. Inhibits angiogenesis and promotes vascular stability in quiescent vessels, where endothelial cells have tight contacts. In quiescent vessels, ANGPT1 oligomers recruit TEK to cell-cell contacts, forming complexes with TEK molecules from adjoining cells, and this leads to preferential activation of phosphatidylinositol 3-kinase and the AKT1 signaling cascades. In migrating endothelial cells that lack cell-cell adhesions, ANGT1 recruits TEK to contacts with the extracellular matrix, leading to the formation of focal adhesion complexes, activation of PTK2/FAK and of the downstream kinases MAPK1/ERK2 and MAPK3/ERK1, and ultimately to the stimulation of sprouting angiogenesis. Mediates blood vessel maturation/stability. Implicated in endothelial developmental processes later and distinct from that of VEGF. Appears to play a crucial role in mediating reciprocal interactions between the endothelium and surrounding matrix and mesenchyme. The chain is Angiopoietin-1 (Angpt1) from Mus musculus (Mouse).